The sequence spans 640 residues: Threonine--tRNA ligase (640 aa).

One can recognise a TGS domain in the interval 1-61; sequence MPAITLPDGS…EHDAYVEIVT (61 aa). The catalytic stretch occupies residues 242-533; it reads DHRRLGRTQD…LIEHYGGALP (292 aa). 3 residues coordinate Zn(2+): cysteine 333, histidine 384, and histidine 510.

Belongs to the class-II aminoacyl-tRNA synthetase family. As to quaternary structure, homodimer. Requires Zn(2+) as cofactor.

Its subcellular location is the cytoplasm. It catalyses the reaction tRNA(Thr) + L-threonine + ATP = L-threonyl-tRNA(Thr) + AMP + diphosphate + H(+). Its function is as follows. Catalyzes the attachment of threonine to tRNA(Thr) in a two-step reaction: L-threonine is first activated by ATP to form Thr-AMP and then transferred to the acceptor end of tRNA(Thr). Also edits incorrectly charged L-seryl-tRNA(Thr). The chain is Threonine--tRNA ligase from Halorhodospira halophila (strain DSM 244 / SL1) (Ectothiorhodospira halophila (strain DSM 244 / SL1)).